A 161-amino-acid chain; its full sequence is Phosphopantetheine adenylyltransferase (161 aa).

Residue Ser-9 coordinates substrate. Residues 9 to 10 and His-17 contribute to the ATP site; that span reads SF. 3 residues coordinate substrate: Lys-41, Val-73, and Lys-87. ATP-binding positions include 88 to 90, Glu-98, and 122 to 128; these read GLR and YSFVSSS.

It belongs to the bacterial CoaD family. As to quaternary structure, homohexamer. Requires Mg(2+) as cofactor.

The protein localises to the cytoplasm. It catalyses the reaction (R)-4'-phosphopantetheine + ATP + H(+) = 3'-dephospho-CoA + diphosphate. Its pathway is cofactor biosynthesis; coenzyme A biosynthesis; CoA from (R)-pantothenate: step 4/5. Its function is as follows. Reversibly transfers an adenylyl group from ATP to 4'-phosphopantetheine, yielding dephospho-CoA (dPCoA) and pyrophosphate. The polypeptide is Phosphopantetheine adenylyltransferase (Mycobacterium bovis (strain ATCC BAA-935 / AF2122/97)).